Reading from the N-terminus, the 618-residue chain is UvrABC system protein C (618 aa).

In terms of domain architecture, GIY-YIG spans 19–97 (SEPGIYRMLD…IKALRPKYNV (79 aa)). The UVR domain maps to 208–243 (QIILDALAERMKQAVNQLNFEEAAVLRDQIKNLRLI).

It belongs to the UvrC family. In terms of assembly, interacts with UvrB in an incision complex.

The protein localises to the cytoplasm. Functionally, the UvrABC repair system catalyzes the recognition and processing of DNA lesions. UvrC both incises the 5' and 3' sides of the lesion. The N-terminal half is responsible for the 3' incision and the C-terminal half is responsible for the 5' incision. The sequence is that of UvrABC system protein C from Legionella pneumophila (strain Paris).